Consider the following 69-residue polypeptide: Sec-independent protein translocase protein TatA (69 aa).

The helical transmembrane segment at 1-21 (MFGLGGQELVLILLIILLLFG) threads the bilayer. The interval 48–69 (EELNKAVDDTPEKEKKSSSEKS) is disordered.

This sequence belongs to the TatA/E family. As to quaternary structure, forms a complex with TatC.

The protein resides in the cell inner membrane. In terms of biological role, part of the twin-arginine translocation (Tat) system that transports large folded proteins containing a characteristic twin-arginine motif in their signal peptide across membranes. TatA could form the protein-conducting channel of the Tat system. In Chlorobium phaeobacteroides (strain BS1), this protein is Sec-independent protein translocase protein TatA.